The chain runs to 62 residues: Large ribosomal subunit protein uL29 (62 aa).

The protein belongs to the universal ribosomal protein uL29 family.

The polypeptide is Large ribosomal subunit protein uL29 (Desulfosudis oleivorans (strain DSM 6200 / JCM 39069 / Hxd3) (Desulfococcus oleovorans)).